Here is a 1074-residue protein sequence, read N- to C-terminus: Pleckstrin homology domain-containing family M member 1 (1074 aa).

The 143-residue stretch at 40-182 folds into the RUN domain; the sequence is TSEDGDANTM…LSFELSYKSA (143 aa). Disordered regions lie at residues 214–244, 272–336, and 382–454; these read QRKESLDSISHSSGSEDIEVQHSGHKIRRNR, LQEN…MFQT, and DEKQ…PPQE. S218 bears the Phosphoserine mark. Composition is skewed to polar residues over residues 313-329 and 393-404; these read SKAQVNSAPSSGPNQEP and PAQSTSDQQPSS. 3 positions are modified to phosphoserine: S433, S436, and S491. The tract at residues 506 to 526 is disordered; the sequence is GNAQPAPAPAPAPAPAPAPAP. The segment covering 511 to 525 has biased composition (pro residues); sequence APAPAPAPAPAPAPA. Residues 551–642 form the PH 1 domain; the sequence is GLMKLGTVAR…WLDRVREALQ (92 aa). Residues 649–655 carry the LIR motif; that stretch reads EDEWVNI. Positions 661-680 are disordered; it reads AEDAPEAPPDSLPPYSTLLP. Residues 672–1074 are interaction with RAB7A; the sequence is LPPYSTLLPE…RKYQEQNVVS (403 aa). The PH 2 domain occupies 701–795; sequence DAIKESLLYL…WRDLVRKVLA (95 aa). The Phorbol-ester/DAG-type zinc-finger motif lies at 1004–1058; it reads QHVYHCDLCTQRGFICQICHHQDIIFPFEFDTTVRCAECRTVFHQSCQAVVRKGC.

As to quaternary structure, interacts (via N- and C-terminus) with RAB7A (GTP-bound form). Simultaneously interacts with RAB7A and ARL8B; bringing about clustering and fusion of late endosomes and lysosomes. Interacts (via RUN domain) with ARL8B (GTP-bound form); the interaction is required for PLEKHM1 localization to lysosomes and for ARL8B function in delivery and degradation of endocytic and autophagic cargo in lysosomes. PLEKHM1 and PLEKHM2 compete for interaction with ARL8B. Interacts with ARL8A; the interaction is weaker than with ARL8B. Interacts with VPS41, VPS11, VPS18, VPS33A and VPS39; indicative for an association with the HOPS complex; the interactions with, at least, VPS41, VPS11, VPS18 and VPS33A require ARL8B. Interacts with GABARAP, GABARAPL, GABARAPL2, MAP1LC3A, MAP1LC3B and MAP1LC3C. Interacts with PAFAH1B. Interacts (via N- and C-terminus) with NDEL1. Interacts (via C-terminus) with MAP3K7. Interacts (via N- and C-terminus) with FAM98A. Interacts (via C-terminus) with DEF8; this interaction is weak but increased in a RAB7A-dependent manner. May interact with sialyl-lex-positive protein.

It is found in the autolysosome membrane. Its subcellular location is the endosome membrane. The protein resides in the late endosome membrane. The protein localises to the lysosome membrane. In terms of biological role, acts as a multivalent adapter protein that regulates Rab7-dependent and HOPS complex-dependent fusion events in the endolysosomal system and couples autophagic and the endocytic trafficking pathways. Acts as a dual effector of RAB7A and ARL8B that simultaneously binds these GTPases, bringing about clustering and fusion of late endosomes and lysosomes. Required for late stages of endolysosomal maturation, facilitating both endocytosis-mediated degradation of growth factor receptors and autophagosome clearance. Interaction with Arl8b is a crucial factor in the terminal maturation of autophagosomes and to mediate autophagosome-lysosome fusion. Positively regulates lysosome peripheral distribution and ruffled border formation in osteoclasts. May be involved in negative regulation of endocytic transport from early endosome to late endosome/lysosome implicating its association with Rab7. May have a role in sialyl-lex-mediated transduction of apoptotic signals. Involved in bone resorption. The protein is Pleckstrin homology domain-containing family M member 1 of Mus musculus (Mouse).